We begin with the raw amino-acid sequence, 440 residues long: Ribosomal protein uS12 methylthiotransferase RimO (440 aa).

Residues 8 to 124 (TSVFLLSLGC…VLDALGARYH (117 aa)) enclose the MTTase N-terminal domain. 6 residues coordinate [4Fe-4S] cluster: C17, C53, C87, C148, C152, and C155. Positions 134 to 363 (LTPPHSSYLK…MELQEEIARK (230 aa)) constitute a Radical SAM core domain. A TRAM domain is found at 366–437 (EAFVGSLMTV…AYELHGTVES (72 aa)).

Belongs to the methylthiotransferase family. RimO subfamily. Requires [4Fe-4S] cluster as cofactor.

Its subcellular location is the cytoplasm. The catalysed reaction is L-aspartate(89)-[ribosomal protein uS12]-hydrogen + (sulfur carrier)-SH + AH2 + 2 S-adenosyl-L-methionine = 3-methylsulfanyl-L-aspartate(89)-[ribosomal protein uS12]-hydrogen + (sulfur carrier)-H + 5'-deoxyadenosine + L-methionine + A + S-adenosyl-L-homocysteine + 2 H(+). Functionally, catalyzes the methylthiolation of an aspartic acid residue of ribosomal protein uS12. The polypeptide is Ribosomal protein uS12 methylthiotransferase RimO (Chlorobium luteolum (strain DSM 273 / BCRC 81028 / 2530) (Pelodictyon luteolum)).